The chain runs to 152 residues: Male-specific protein scotti (152 aa).

It belongs to the male-specific scotti family.

Post-meiotically transcribed gene that has a role in late spermiogenesis; required for actin cone progression during spermatid individualization. The sequence is that of Male-specific protein scotti from Drosophila mojavensis (Fruit fly).